The sequence spans 274 residues: Endonuclease 8-like L720 (274 aa).

An FPG-type; degenerate zinc finger spans residues 241–274; it reads RIYRKSLCPLGHKTIRKKIGLRNRMTTWCPVCQL.

It belongs to the FPG family.

This Acanthamoeba polyphaga mimivirus (APMV) protein is Endonuclease 8-like L720.